Reading from the N-terminus, the 106-residue chain is Replication restart protein PriB (106 aa).

Residues 4–103 (VNRLVLSGTV…LHAEQIELID (100 aa)) form the SSB domain.

The protein belongs to the PriB family. As to quaternary structure, homodimer. Interacts with PriA and DnaT. Component of the replication restart primosome. Primosome assembly occurs via a 'hand-off' mechanism. PriA binds to replication forks, subsequently PriB then DnaT bind; DnaT then displaces ssDNA to generate the helicase loading substrate.

Functionally, involved in the restart of stalled replication forks, which reloads the replicative helicase on sites other than the origin of replication; the PriA-PriB pathway is the major replication restart pathway. During primosome assembly it facilitates complex formation between PriA and DnaT on DNA; stabilizes PriA on DNA. Stimulates the DNA unwinding activity of PriA helicase. The protein is Replication restart protein PriB of Pectobacterium carotovorum subsp. carotovorum (strain PC1).